The following is a 40-amino-acid chain: Potassium channel toxin alpha-KTx 12.2 (40 aa).

Disulfide bonds link C2–C5, C10–C31, C16–C36, and C20–C38.

It belongs to the short scorpion toxin superfamily. Potassium channel inhibitor family. Alpha-KTx 12 subfamily. Expressed by the venom gland.

The protein resides in the secreted. In terms of biological role, inhibits high conductance calcium-activated potassium channels. Reversibly inhibits Shaker B potassium channels. The protein is Potassium channel toxin alpha-KTx 12.2 of Tityus trivittatus (Argentinean scorpion).